A 316-amino-acid polypeptide reads, in one-letter code: Fe-S cluster assembly protein DRE2 (316 aa).

Residues 7–139 (VSPPKRTLLL…PDYGDNEGAV (133 aa)) are N-terminal SAM-like domain. The segment at 140–208 (TLKFGLKKKN…EDTLMTEEDL (69 aa)) is linker. The [2Fe-2S] cluster site is built by cysteine 218, cysteine 229, cysteine 232, and cysteine 234. The segment at 218–234 (CQPKAGKRRRACKDCSC) is fe-S binding site A. Residues cysteine 279, cysteine 282, cysteine 290, and cysteine 293 each coordinate [4Fe-4S] cluster. 2 short sequence motifs (cx2C motif) span residues 279-282 (CGNC) and 290-293 (CDGC). Positions 279-293 (CGNCSLGDAFRCDGC) are fe-S binding site B.

The protein belongs to the anamorsin family. Monomer. Interacts with TAH18. Interacts with MIA40. Requires [2Fe-2S] cluster as cofactor. It depends on [4Fe-4S] cluster as a cofactor.

It localises to the cytoplasm. The protein localises to the mitochondrion intermembrane space. Functionally, component of the cytosolic iron-sulfur (Fe-S) protein assembly (CIA) machinery required for the maturation of extramitochondrial Fe-S proteins. Part of an electron transfer chain functioning in an early step of cytosolic Fe-S biogenesis, facilitating the de novo assembly of a [4Fe-4S] cluster on the scaffold complex CFD1-NBP35. Electrons are transferred to DRE2 from NADPH via the FAD- and FMN-containing protein TAH18. TAH18-DRE2 are also required for the assembly of the diferric tyrosyl radical cofactor of ribonucleotide reductase (RNR), probably by providing electrons for reduction during radical cofactor maturation in the catalytic small subunit RNR2. The chain is Fe-S cluster assembly protein DRE2 from Fusarium vanettenii (strain ATCC MYA-4622 / CBS 123669 / FGSC 9596 / NRRL 45880 / 77-13-4) (Fusarium solani subsp. pisi).